The chain runs to 126 residues: MIRNISKSIVNLNSQKIATNTSFKELVLESKKPVIVDIRPCYYTPTKFLNKELFEAIKEKNDTFELVTIDFDEEYELAKLLKIQSFPTIIGFSNGNFLKKHTGPFRSKSHILEFLNHIETEHKKKY.

Residues 14 to 120 enclose the Thioredoxin domain; the sequence is SQKIATNTSF…ILEFLNHIET (107 aa).

Belongs to the thioredoxin family.

The protein resides in the mitochondrion. This is Thioredoxin domain-containing protein, mitochondrial from Dictyostelium discoideum (Social amoeba).